The primary structure comprises 185 residues: Large ribosomal subunit protein bL17 (185 aa).

Belongs to the bacterial ribosomal protein bL17 family. Part of the 50S ribosomal subunit. Contacts protein L32.

The protein is Large ribosomal subunit protein bL17 of Rhodococcus erythropolis (strain PR4 / NBRC 100887).